A 404-amino-acid polypeptide reads, in one-letter code: 26S proteasome regulatory subunit 6A-B (404 aa).

ATP is bound at residue 192 to 199 (GPPGTGKT).

This sequence belongs to the AAA ATPase family. As to quaternary structure, may form a heterodimer with a related family member.

The protein localises to the cytoplasm. The protein resides in the nucleus. Functionally, the 26S proteasome is involved in the ATP-dependent degradation of ubiquitinated proteins. The regulatory (or ATPase) complex confers ATP dependency and substrate specificity to the 26S complex. The chain is 26S proteasome regulatory subunit 6A-B (psmc3-b) from Xenopus laevis (African clawed frog).